Reading from the N-terminus, the 158-residue chain is SsrA-binding protein (158 aa).

A compositionally biased stretch (basic and acidic residues) spans 133 to 147 (KRQALRERQDNREAQ). The segment at 133 to 158 (KRQALRERQDNREAQRAMASRKHLGE) is disordered.

It belongs to the SmpB family.

It is found in the cytoplasm. In terms of biological role, required for rescue of stalled ribosomes mediated by trans-translation. Binds to transfer-messenger RNA (tmRNA), required for stable association of tmRNA with ribosomes. tmRNA and SmpB together mimic tRNA shape, replacing the anticodon stem-loop with SmpB. tmRNA is encoded by the ssrA gene; the 2 termini fold to resemble tRNA(Ala) and it encodes a 'tag peptide', a short internal open reading frame. During trans-translation Ala-aminoacylated tmRNA acts like a tRNA, entering the A-site of stalled ribosomes, displacing the stalled mRNA. The ribosome then switches to translate the ORF on the tmRNA; the nascent peptide is terminated with the 'tag peptide' encoded by the tmRNA and targeted for degradation. The ribosome is freed to recommence translation, which seems to be the essential function of trans-translation. The chain is SsrA-binding protein from Leifsonia xyli subsp. xyli (strain CTCB07).